The primary structure comprises 126 residues: Large ribosomal subunit protein uL22c (126 aa).

This sequence belongs to the universal ribosomal protein uL22 family. In terms of assembly, part of the 50S ribosomal subunit.

Its subcellular location is the plastid. It is found in the chloroplast. This protein binds specifically to 23S rRNA. Its function is as follows. The globular domain of the protein is located near the polypeptide exit tunnel on the outside of the subunit, while an extended beta-hairpin is found that lines the wall of the exit tunnel in the center of the 70S ribosome. This is Large ribosomal subunit protein uL22c (rpl22) from Cryptomeria japonica (Japanese cedar).